The chain runs to 346 residues: UDP-3-O-acylglucosamine N-acyltransferase (346 aa).

His-253 (proton acceptor) is an active-site residue.

This sequence belongs to the transferase hexapeptide repeat family. LpxD subfamily. Homotrimer.

The catalysed reaction is a UDP-3-O-[(3R)-3-hydroxyacyl]-alpha-D-glucosamine + a (3R)-hydroxyacyl-[ACP] = a UDP-2-N,3-O-bis[(3R)-3-hydroxyacyl]-alpha-D-glucosamine + holo-[ACP] + H(+). It participates in bacterial outer membrane biogenesis; LPS lipid A biosynthesis. Its function is as follows. Catalyzes the N-acylation of UDP-3-O-acylglucosamine using 3-hydroxyacyl-ACP as the acyl donor. Is involved in the biosynthesis of lipid A, a phosphorylated glycolipid that anchors the lipopolysaccharide to the outer membrane of the cell. The chain is UDP-3-O-acylglucosamine N-acyltransferase from Rickettsia typhi (strain ATCC VR-144 / Wilmington).